A 152-amino-acid polypeptide reads, in one-letter code: Ribonuclease H (152 aa).

One can recognise an RNase H type-1 domain in the interval Met1–Glu142. The Mg(2+) site is built by Asp10, Glu48, Asp70, and Asp134.

It belongs to the RNase H family. Monomer. Mg(2+) serves as cofactor.

It localises to the cytoplasm. It catalyses the reaction Endonucleolytic cleavage to 5'-phosphomonoester.. Its function is as follows. Endonuclease that specifically degrades the RNA of RNA-DNA hybrids. The chain is Ribonuclease H from Rickettsia felis (strain ATCC VR-1525 / URRWXCal2) (Rickettsia azadi).